A 492-amino-acid chain; its full sequence is Probable glycogen synthase 2 (492 aa).

Lys-15 serves as a coordination point for ADP-alpha-D-glucose.

It belongs to the glycosyltransferase 1 family. Bacterial/plant glycogen synthase subfamily.

The catalysed reaction is [(1-&gt;4)-alpha-D-glucosyl](n) + ADP-alpha-D-glucose = [(1-&gt;4)-alpha-D-glucosyl](n+1) + ADP + H(+). Its pathway is glycan biosynthesis; glycogen biosynthesis. In terms of biological role, synthesizes alpha-1,4-glucan chains using ADP-glucose. The protein is Probable glycogen synthase 2 (glgA2) of Nostoc sp. (strain PCC 7120 / SAG 25.82 / UTEX 2576).